Consider the following 148-residue polypeptide: Suppressor APC domain-containing protein 1 (148 aa).

The interval 120–148 (SRQQKGVTQPKEEMAQRGCTKGPRGPTRV) is disordered.

The protein is Suppressor APC domain-containing protein 1 (SAPCD1) of Homo sapiens (Human).